A 254-amino-acid chain; its full sequence is Dihydroorotate dehydrogenase B (NAD(+)), electron transfer subunit (254 aa).

The 99-residue stretch at Met1–Ile99 folds into the FAD-binding FR-type domain. Residues Arg50–Ser53, Leu67–Arg69, and Gly74–Thr75 each bind FAD. Residues Cys218, Cys223, Cys226, and Cys241 each contribute to the [2Fe-2S] cluster site.

This sequence belongs to the PyrK family. In terms of assembly, heterotetramer of 2 PyrK and 2 PyrD type B subunits. [2Fe-2S] cluster serves as cofactor. Requires FAD as cofactor.

It functions in the pathway pyrimidine metabolism; UMP biosynthesis via de novo pathway; orotate from (S)-dihydroorotate (NAD(+) route): step 1/1. Responsible for channeling the electrons from the oxidation of dihydroorotate from the FMN redox center in the PyrD type B subunit to the ultimate electron acceptor NAD(+). The polypeptide is Dihydroorotate dehydrogenase B (NAD(+)), electron transfer subunit (Listeria monocytogenes serovar 1/2a (strain ATCC BAA-679 / EGD-e)).